The following is a 152-amino-acid chain: Em-like protein GEA1 (152 aa).

Composition is skewed to basic and acidic residues over residues 1–17 (MASK…KAKQ) and 32–63 (EAQE…IGHK). Residues 1–63 (MASKQLSREE…HEGYQEIGHK (63 aa)) form a disordered region. 4 tandem repeats follow at residues 44-63 (GGQT…IGHK), 64-83 (GGEA…MGHK), 84-103 (GGEA…MGHK), and 104-123 (GGEA…MGRK). Residues 44–123 (GGQTRKEQLG…HEGYKEMGRK (80 aa)) are 4 X 20 AA tandem repeats. The interval 116–152 (GYKEMGRKGGLSTMEKSGGERAEEEGIEIDESKFTNK) is disordered.

The protein belongs to the small hydrophilic plant seed protein family. In terms of tissue distribution, in seeds only. Specifically located to vascular bundles in the cotyledon and axis of the dry seed. Also found in the epiderm and outer layers of the cortex in the embryo axis.

Functionally, it is thought to provide protection for the cytoplasm during the desiccation stage of embryo development. This chain is Em-like protein GEA1 (EM1), found in Arabidopsis thaliana (Mouse-ear cress).